Here is a 150-residue protein sequence, read N- to C-terminus: Large ribosomal subunit protein bL9 (150 aa).

The protein belongs to the bacterial ribosomal protein bL9 family.

Functionally, binds to the 23S rRNA. This chain is Large ribosomal subunit protein bL9, found in Shewanella oneidensis (strain ATCC 700550 / JCM 31522 / CIP 106686 / LMG 19005 / NCIMB 14063 / MR-1).